A 233-amino-acid polypeptide reads, in one-letter code: Orotidine 5'-phosphate decarboxylase (233 aa).

Substrate contacts are provided by residues D13, K35, 62-71, T122, R182, Q191, G211, and R212; that span reads DLKFHDIPNT. The Proton donor role is filled by K64.

Belongs to the OMP decarboxylase family. Type 1 subfamily. Homodimer.

The catalysed reaction is orotidine 5'-phosphate + H(+) = UMP + CO2. It functions in the pathway pyrimidine metabolism; UMP biosynthesis via de novo pathway; UMP from orotate: step 2/2. Its function is as follows. Catalyzes the decarboxylation of orotidine 5'-monophosphate (OMP) to uridine 5'-monophosphate (UMP). The polypeptide is Orotidine 5'-phosphate decarboxylase (Pseudomonas putida (strain ATCC 700007 / DSM 6899 / JCM 31910 / BCRC 17059 / LMG 24140 / F1)).